The following is a 603-amino-acid chain: Pyruvate oxidase (603 aa).

Residues 1 to 191 form a core region; that stretch reads MVMKQTKQTN…WYASANSYQT (191 aa). An FAD-binding region spans residues 192–342; sequence PLLPEPDVQA…ILAQVSERES (151 aa). Residues 343-603 are thiamine pyrophosphate binding; it reads TPWWQANLAN…LQHQIGQGGF (261 aa). D447, N474, and Q476 together coordinate Mg(2+).

This sequence belongs to the TPP enzyme family. In terms of assembly, homotetramer. Requires FAD as cofactor. Mg(2+) is required as a cofactor. It depends on thiamine diphosphate as a cofactor.

The enzyme catalyses pyruvate + phosphate + O2 + H(+) = acetyl phosphate + H2O2 + CO2. Its function is as follows. Important for the aerobic growth. Decarboxylates pyruvate in four steps. The energy released is partially stored in acetyl phosphate. This Lactiplantibacillus plantarum (strain ATCC BAA-793 / NCIMB 8826 / WCFS1) (Lactobacillus plantarum) protein is Pyruvate oxidase (pox5).